The chain runs to 456 residues: Asparagine--tRNA ligase (456 aa).

The protein belongs to the class-II aminoacyl-tRNA synthetase family. Homodimer.

Its subcellular location is the cytoplasm. It carries out the reaction tRNA(Asn) + L-asparagine + ATP = L-asparaginyl-tRNA(Asn) + AMP + diphosphate + H(+). The protein is Asparagine--tRNA ligase of Mycoplasmoides gallisepticum (strain R(low / passage 15 / clone 2)) (Mycoplasma gallisepticum).